A 104-amino-acid polypeptide reads, in one-letter code: Disrupted in renal carcinoma protein 1 (104 aa).

Positions 1 to 23 are disordered; the sequence is MPEAHMQPAKLQTSLPTTDHGSK. Residues 10–19 show a composition bias toward polar residues; it reads KLQTSLPTTD.

In terms of tissue distribution, expressed at low steady-state level in adult placenta, testis, ovary, prostate, fetal kidney, spleen and skeletal muscle.

The chain is Disrupted in renal carcinoma protein 1 (DIRC1) from Homo sapiens (Human).